A 200-amino-acid chain; its full sequence is Probable molybdenum cofactor guanylyltransferase (200 aa).

GTP contacts are provided by residues 8-10, lysine 20, aspartate 66, and aspartate 97; that span reads LAG. A Mg(2+)-binding site is contributed by aspartate 97.

The protein belongs to the MobA family. Requires Mg(2+) as cofactor.

Its subcellular location is the cytoplasm. It carries out the reaction Mo-molybdopterin + GTP + H(+) = Mo-molybdopterin guanine dinucleotide + diphosphate. Functionally, transfers a GMP moiety from GTP to Mo-molybdopterin (Mo-MPT) cofactor (Moco or molybdenum cofactor) to form Mo-molybdopterin guanine dinucleotide (Mo-MGD) cofactor. The polypeptide is Probable molybdenum cofactor guanylyltransferase (Bacillus velezensis (strain DSM 23117 / BGSC 10A6 / LMG 26770 / FZB42) (Bacillus amyloliquefaciens subsp. plantarum)).